Here is a 486-residue protein sequence, read N- to C-terminus: Probable cytosol aminopeptidase (486 aa).

Residues lysine 256 and aspartate 261 each coordinate Mn(2+). The active site involves lysine 268. Mn(2+) contacts are provided by aspartate 280, aspartate 339, and glutamate 341. Arginine 343 is a catalytic residue.

Belongs to the peptidase M17 family. Mn(2+) is required as a cofactor.

It is found in the cytoplasm. The enzyme catalyses Release of an N-terminal amino acid, Xaa-|-Yaa-, in which Xaa is preferably Leu, but may be other amino acids including Pro although not Arg or Lys, and Yaa may be Pro. Amino acid amides and methyl esters are also readily hydrolyzed, but rates on arylamides are exceedingly low.. It carries out the reaction Release of an N-terminal amino acid, preferentially leucine, but not glutamic or aspartic acids.. In terms of biological role, presumably involved in the processing and regular turnover of intracellular proteins. Catalyzes the removal of unsubstituted N-terminal amino acids from various peptides. This Synechococcus sp. (strain ATCC 27144 / PCC 6301 / SAUG 1402/1) (Anacystis nidulans) protein is Probable cytosol aminopeptidase.